The following is an 85-amino-acid chain: Small ribosomal subunit protein uS17 (85 aa).

It belongs to the universal ribosomal protein uS17 family. As to quaternary structure, part of the 30S ribosomal subunit.

Functionally, one of the primary rRNA binding proteins, it binds specifically to the 5'-end of 16S ribosomal RNA. The polypeptide is Small ribosomal subunit protein uS17 (Geobacter sulfurreducens (strain ATCC 51573 / DSM 12127 / PCA)).